The following is a 224-amino-acid chain: Cytochrome c biogenesis ATP-binding export protein CcmA (224 aa).

The ABC transporter domain occupies 1–220 (MQNAEAAPAL…EYAHAEVVGA (220 aa)). 40–47 (GANGSGKT) is a binding site for ATP.

This sequence belongs to the ABC transporter superfamily. CcmA exporter (TC 3.A.1.107) family. In terms of assembly, the complex is composed of two ATP-binding proteins (CcmA) and two transmembrane proteins (CcmB).

The protein resides in the cell inner membrane. It catalyses the reaction heme b(in) + ATP + H2O = heme b(out) + ADP + phosphate + H(+). Its function is as follows. Part of the ABC transporter complex CcmAB involved in the biogenesis of c-type cytochromes; once thought to export heme, this seems not to be the case, but its exact role is uncertain. Responsible for energy coupling to the transport system. In Bordetella bronchiseptica (strain ATCC BAA-588 / NCTC 13252 / RB50) (Alcaligenes bronchisepticus), this protein is Cytochrome c biogenesis ATP-binding export protein CcmA.